A 148-amino-acid chain; its full sequence is Hemoglobin subunit beta (148 aa).

In terms of domain architecture, Globin spans 3-148 (DWTDAERSAI…VVSALGRQYH (146 aa)). Positions 64 and 93 each coordinate heme b.

It belongs to the globin family. Heterotetramer of two alpha chains and two beta chains. As to expression, red blood cells.

Involved in oxygen transport from gills to the various peripheral tissues. The chain is Hemoglobin subunit beta (hbb) from Oncorhynchus nerka (Sockeye salmon).